The following is a 387-amino-acid chain: Succinate--CoA ligase [ADP-forming] subunit beta (387 aa).

Residues 9–236 enclose the ATP-grasp domain; it reads KELFAKHNVP…RAATDPLELK (228 aa). ATP contacts are provided by residues K45, 52–54, S94, and E99; that span reads GRG. 2 residues coordinate Mg(2+): N191 and D205. Substrate is bound by residues N256 and 318–320; that span reads GIT.

This sequence belongs to the succinate/malate CoA ligase beta subunit family. As to quaternary structure, heterotetramer of two alpha and two beta subunits. It depends on Mg(2+) as a cofactor.

The catalysed reaction is succinate + ATP + CoA = succinyl-CoA + ADP + phosphate. It carries out the reaction GTP + succinate + CoA = succinyl-CoA + GDP + phosphate. Its pathway is carbohydrate metabolism; tricarboxylic acid cycle; succinate from succinyl-CoA (ligase route): step 1/1. In terms of biological role, succinyl-CoA synthetase functions in the citric acid cycle (TCA), coupling the hydrolysis of succinyl-CoA to the synthesis of either ATP or GTP and thus represents the only step of substrate-level phosphorylation in the TCA. The beta subunit provides nucleotide specificity of the enzyme and binds the substrate succinate, while the binding sites for coenzyme A and phosphate are found in the alpha subunit. The protein is Succinate--CoA ligase [ADP-forming] subunit beta of Mycobacterium marinum (strain ATCC BAA-535 / M).